Consider the following 430-residue polypeptide: Adenylosuccinate synthetase (430 aa).

GTP is bound by residues 12-18 (GDEGKGK) and 40-42 (GHT). The active-site Proton acceptor is the aspartate 13. Mg(2+) is bound by residues aspartate 13 and glycine 40. IMP contacts are provided by residues 13-16 (DEGK), 38-41 (NAGH), threonine 128, arginine 142, glutamine 223, threonine 238, and arginine 302. Histidine 41 (proton donor) is an active-site residue. 298 to 304 (TTTGRPR) lines the substrate pocket. GTP is bound by residues arginine 304, 330–332 (SID), and 412–414 (SVG).

The protein belongs to the adenylosuccinate synthetase family. As to quaternary structure, homodimer. The cofactor is Mg(2+).

The protein localises to the cytoplasm. It carries out the reaction IMP + L-aspartate + GTP = N(6)-(1,2-dicarboxyethyl)-AMP + GDP + phosphate + 2 H(+). Its pathway is purine metabolism; AMP biosynthesis via de novo pathway; AMP from IMP: step 1/2. Plays an important role in the de novo pathway of purine nucleotide biosynthesis. Catalyzes the first committed step in the biosynthesis of AMP from IMP. This Exiguobacterium sibiricum (strain DSM 17290 / CCUG 55495 / CIP 109462 / JCM 13490 / 255-15) protein is Adenylosuccinate synthetase.